The primary structure comprises 190 residues: Embryo-specific protein ATS3B (190 aa).

The first 24 residues, 1 to 24 (MASVRLFFTLISFVFIISTSVYES), serve as a signal peptide directing secretion. Asn-37 is a glycosylation site (N-linked (GlcNAc...) asparagine). The PLAT domain maps to 48-158 (CAYTVIISTS…ESVWYGFNYC (111 aa)).

As to quaternary structure, interacts with EULS3 (via N-terminus). As to expression, expressed in roots, rosette leaves, stems, cauline leaves and flowers.

It is found in the secreted. In terms of biological role, may play a role during embryo development. In Arabidopsis thaliana (Mouse-ear cress), this protein is Embryo-specific protein ATS3B.